A 518-amino-acid chain; its full sequence is Glutamate--cysteine ligase (518 aa).

Belongs to the glutamate--cysteine ligase type 1 family. Type 1 subfamily.

It catalyses the reaction L-cysteine + L-glutamate + ATP = gamma-L-glutamyl-L-cysteine + ADP + phosphate + H(+). It functions in the pathway sulfur metabolism; glutathione biosynthesis; glutathione from L-cysteine and L-glutamate: step 1/2. The sequence is that of Glutamate--cysteine ligase from Shigella boydii serotype 4 (strain Sb227).